We begin with the raw amino-acid sequence, 260 residues long: POLG alternative reading frame (260 aa).

Disordered stretches follow at residues 1 to 50 (MEPK…LRPR) and 108 to 219 (ARRG…RRGG). Low complexity-rich tracts occupy residues 36–48 (AGSS…LQLR), 116–154 (GRGA…GQPG), and 164–186 (AEPA…EAPG). The interval 104–130 (ANLRARRGDAWRGRGAPQRRAPAEARA) is required for nucleolar localization. Gly residues-rich tracts occupy residues 187–199 (LGLG…VRPR) and 209–219 (RGAGPGVRRGG).

In terms of assembly, interacts with C1QBP; the interaction results in nucleolar localization of C1QBP, probably due to prevention of C1QBP maturation and redirection from mitochondria to nucleoli. In terms of processing, undergoes proteolytic cleavage to produce a secreted C-terminal fragment.

It localises to the nucleus. It is found in the nucleolus. The protein resides in the secreted. The polypeptide is POLG alternative reading frame (Homo sapiens (Human)).